The chain runs to 414 residues: TnpB-like protein MJ1635 (414 aa).

Residues Cys-329, Cys-332, Cys-346, and Cys-349 each contribute to the Zn(2+) site.

In the N-terminal section; belongs to the transposase 2 family. This sequence in the C-terminal section; belongs to the transposase 35 family.

This Methanocaldococcus jannaschii (strain ATCC 43067 / DSM 2661 / JAL-1 / JCM 10045 / NBRC 100440) (Methanococcus jannaschii) protein is TnpB-like protein MJ1635.